We begin with the raw amino-acid sequence, 390 residues long: Serpin B4 (390 aa).

An N-acetylmethionine modification is found at Met1.

Belongs to the serpin family. Ov-serpin subfamily. Squamous cells.

The protein localises to the cytoplasm. Its function is as follows. May act as a protease inhibitor to modulate the host immune response against tumor cells. This is Serpin B4 (SERPINB4) from Homo sapiens (Human).